The sequence spans 126 residues: MPTINQLVRKGRASETTKSKSPALQDCPQRRGVCTRVYTTTPKKPNSALRKVAKVRLTNGFEVISYIGGEGHNLQEHSVVLIRGGRVKDLPGVRYHMVRGSLDTQGVKDRRQARSKYGAKRAKAAK.

The interval 1-26 is disordered; sequence MPTINQLVRKGRASETTKSKSPALQD. 3-methylthioaspartic acid is present on Asp-89. The disordered stretch occupies residues 102 to 126; that stretch reads LDTQGVKDRRQARSKYGAKRAKAAK. The span at 113–126 shows a compositional bias: basic residues; the sequence is ARSKYGAKRAKAAK.

Belongs to the universal ribosomal protein uS12 family. As to quaternary structure, part of the 30S ribosomal subunit. Contacts proteins S8 and S17. May interact with IF1 in the 30S initiation complex.

In terms of biological role, with S4 and S5 plays an important role in translational accuracy. Interacts with and stabilizes bases of the 16S rRNA that are involved in tRNA selection in the A site and with the mRNA backbone. Located at the interface of the 30S and 50S subunits, it traverses the body of the 30S subunit contacting proteins on the other side and probably holding the rRNA structure together. The combined cluster of proteins S8, S12 and S17 appears to hold together the shoulder and platform of the 30S subunit. The protein is Small ribosomal subunit protein uS12 of Burkholderia mallei (strain ATCC 23344).